Consider the following 618-residue polypeptide: Glycine--tRNA ligase 2 (618 aa).

E187 lines the glycine pocket. ATP is bound by residues R219–E221 and R230–V231. Residue E238 coordinates glycine. E347–C348 lines the ATP pocket. Glycine is bound at residue E466–S468. Residue R473 participates in ATP binding.

Belongs to the class-II aminoacyl-tRNA synthetase family. In terms of assembly, homodimer.

It localises to the cytoplasm. The enzyme catalyses tRNA(Gly) + glycine + ATP = glycyl-tRNA(Gly) + AMP + diphosphate. It carries out the reaction 2 ATP + H(+) = P(1),P(4)-bis(5'-adenosyl) tetraphosphate + diphosphate. Functionally, catalyzes the ATP-dependent ligation of glycine to the 3'-end of its cognate tRNA, via the formation of an aminoacyl-adenylate intermediate (Gly-AMP). Also produces diadenosine tetraphosphate (Ap4A), a universal pleiotropic signaling molecule needed for cell regulation pathways, by direct condensation of 2 ATPs. Thereby, may play a special role in Ap4A homeostasis. The polypeptide is Glycine--tRNA ligase 2 (GRS2) (Saccharomyces cerevisiae (strain ATCC 204508 / S288c) (Baker's yeast)).